The chain runs to 162 residues: NADH-quinone oxidoreductase subunit I (162 aa).

4Fe-4S ferredoxin-type domains lie at L53–E83 and T93–I122. Positions 63, 66, 69, 73, 102, 105, 108, and 112 each coordinate [4Fe-4S] cluster.

Belongs to the complex I 23 kDa subunit family. In terms of assembly, NDH-1 is composed of 14 different subunits. Subunits NuoA, H, J, K, L, M, N constitute the membrane sector of the complex. [4Fe-4S] cluster serves as cofactor.

The protein resides in the cell inner membrane. It carries out the reaction a quinone + NADH + 5 H(+)(in) = a quinol + NAD(+) + 4 H(+)(out). Functionally, NDH-1 shuttles electrons from NADH, via FMN and iron-sulfur (Fe-S) centers, to quinones in the respiratory chain. The immediate electron acceptor for the enzyme in this species is believed to be ubiquinone. Couples the redox reaction to proton translocation (for every two electrons transferred, four hydrogen ions are translocated across the cytoplasmic membrane), and thus conserves the redox energy in a proton gradient. This Bordetella bronchiseptica (strain ATCC BAA-588 / NCTC 13252 / RB50) (Alcaligenes bronchisepticus) protein is NADH-quinone oxidoreductase subunit I.